Consider the following 264-residue polypeptide: S-adenosylmethionine decarboxylase proenzyme (264 aa).

Residue Ser112 is the Schiff-base intermediate with substrate; via pyruvic acid of the active site. Ser112 is modified (pyruvic acid (Ser); by autocatalysis). His117 serves as the catalytic Proton acceptor; for processing activity. Cys140 functions as the Proton donor; for catalytic activity in the catalytic mechanism.

Belongs to the prokaryotic AdoMetDC family. Type 2 subfamily. As to quaternary structure, heterooctamer of four alpha and four beta chains arranged as a tetramer of alpha/beta heterodimers. The cofactor is pyruvate. Is synthesized initially as an inactive proenzyme. Formation of the active enzyme involves a self-maturation process in which the active site pyruvoyl group is generated from an internal serine residue via an autocatalytic post-translational modification. Two non-identical subunits are generated from the proenzyme in this reaction, and the pyruvate is formed at the N-terminus of the alpha chain, which is derived from the carboxyl end of the proenzyme. The post-translation cleavage follows an unusual pathway, termed non-hydrolytic serinolysis, in which the side chain hydroxyl group of the serine supplies its oxygen atom to form the C-terminus of the beta chain, while the remainder of the serine residue undergoes an oxidative deamination to produce ammonia and the pyruvoyl group blocking the N-terminus of the alpha chain.

It carries out the reaction S-adenosyl-L-methionine + H(+) = S-adenosyl 3-(methylsulfanyl)propylamine + CO2. Its pathway is amine and polyamine biosynthesis; S-adenosylmethioninamine biosynthesis; S-adenosylmethioninamine from S-adenosyl-L-methionine: step 1/1. Functionally, catalyzes the decarboxylation of S-adenosylmethionine to S-adenosylmethioninamine (dcAdoMet), the propylamine donor required for the synthesis of the polyamines spermine and spermidine from the diamine putrescine. This is S-adenosylmethionine decarboxylase proenzyme from Yersinia pseudotuberculosis serotype I (strain IP32953).